Here is a 374-residue protein sequence, read N- to C-terminus: uncharacterized protein (374 aa).

The first 21 residues, 1 to 21 (MSIISRVCIPCAVLLFAQLHA), serve as a signal peptide directing secretion. Residues 22–102 (KELVHVSQLK…ASASAWTSLS (81 aa)) form the Fibronectin type-III domain.

This is an uncharacterized protein from Treponema pallidum (strain Nichols).